Reading from the N-terminus, the 130-residue chain is RutC family protein slr0709 (130 aa).

This sequence belongs to the RutC family.

The sequence is that of RutC family protein slr0709 from Synechocystis sp. (strain ATCC 27184 / PCC 6803 / Kazusa).